Consider the following 85-residue polypeptide: High-potential iron-sulfur protein (85 aa).

[4Fe-4S] cluster-binding residues include cysteine 43, cysteine 46, cysteine 63, and cysteine 77.

The protein belongs to the high-potential iron-sulfur protein (HiPIP) family. Homodimer.

It localises to the periplasm. Specific class of high-redox-potential 4Fe-4S ferredoxins. Functions in anaerobic electron transport in most purple and in some other photosynthetic bacteria and in at least one genus (Paracoccus) of halophilic, denitrifying bacteria. The protein is High-potential iron-sulfur protein of Allochromatium warmingii (Chromatium warmingii).